The sequence spans 94 residues: Host-modulation protein 11K (94 aa).

As to quaternary structure, interacts with host GRB2; this interaction alters host cell environment by modulating host signaling pathways.

The protein localises to the host cytoplasm. Its function is as follows. Enhances viral DNA replication and virion release. Mechansitically, optimizes viral DNA replication by interacting with host GRB2 to inhibit the negative effect of ERK signaling on B19 viral replication. Plays a role in viral infectivity. Induces apoptosis of primary erythroid progenitor cells. The protein is Host-modulation protein 11K (11K) of Human parvovirus B19 (strain HV) (HPV B19).